An 82-amino-acid polypeptide reads, in one-letter code: ATP synthase subunit c (82 aa).

The next 2 membrane-spanning stretches (helical) occupy residues 7-27 and 53-73; these read FVAL…CIGI and FLLA…AMMF.

This sequence belongs to the ATPase C chain family. F-type ATPases have 2 components, F(1) - the catalytic core - and F(0) - the membrane proton channel. F(1) has five subunits: alpha(3), beta(3), gamma(1), delta(1), epsilon(1). F(0) has three main subunits: a(1), b(2) and c(10-14). The alpha and beta chains form an alternating ring which encloses part of the gamma chain. F(1) is attached to F(0) by a central stalk formed by the gamma and epsilon chains, while a peripheral stalk is formed by the delta and b chains.

It localises to the cell inner membrane. Its function is as follows. F(1)F(0) ATP synthase produces ATP from ADP in the presence of a proton or sodium gradient. F-type ATPases consist of two structural domains, F(1) containing the extramembraneous catalytic core and F(0) containing the membrane proton channel, linked together by a central stalk and a peripheral stalk. During catalysis, ATP synthesis in the catalytic domain of F(1) is coupled via a rotary mechanism of the central stalk subunits to proton translocation. In terms of biological role, key component of the F(0) channel; it plays a direct role in translocation across the membrane. A homomeric c-ring of between 10-14 subunits forms the central stalk rotor element with the F(1) delta and epsilon subunits. This chain is ATP synthase subunit c, found in Aromatoleum aromaticum (strain DSM 19018 / LMG 30748 / EbN1) (Azoarcus sp. (strain EbN1)).